The chain runs to 254 residues: Ribonuclease PH (254 aa).

Phosphate-binding positions include arginine 90 and 128–130 (GTR).

Belongs to the RNase PH family. In terms of assembly, homohexameric ring arranged as a trimer of dimers.

The enzyme catalyses tRNA(n+1) + phosphate = tRNA(n) + a ribonucleoside 5'-diphosphate. Its function is as follows. Phosphorolytic 3'-5' exoribonuclease that plays an important role in tRNA 3'-end maturation. Removes nucleotide residues following the 3'-CCA terminus of tRNAs; can also add nucleotides to the ends of RNA molecules by using nucleoside diphosphates as substrates, but this may not be physiologically important. Probably plays a role in initiation of 16S rRNA degradation (leading to ribosome degradation) during starvation. The polypeptide is Ribonuclease PH (Corynebacterium kroppenstedtii (strain DSM 44385 / JCM 11950 / CIP 105744 / CCUG 35717)).